The following is a 186-amino-acid chain: Ribosome-recycling factor (186 aa).

This sequence belongs to the RRF family.

It localises to the cytoplasm. Responsible for the release of ribosomes from messenger RNA at the termination of protein biosynthesis. May increase the efficiency of translation by recycling ribosomes from one round of translation to another. This Prosthecochloris aestuarii (strain DSM 271 / SK 413) protein is Ribosome-recycling factor.